The sequence spans 655 residues: Very long-chain specific acyl-CoA dehydrogenase, mitochondrial (655 aa).

The transit peptide at 1–40 (MRAARMAQSTGRQLLRLRGVSSWPGELLGQPRPGPARRPY) directs the protein to the mitochondrion. Residues 22–66 (SWPGELLGQPRPGPARRPYASGVAQAAVDQSDSQPSEASTREKRA) form a disordered region. The segment at 41 to 482 (ASGVAQAAVD…ALQGCMDKGK (442 aa)) is catalytic. Polar residues predominate over residues 49 to 59 (VDQSDSQPSEA). Position 71 is an N6-acetyllysine; alternate (lysine 71). An N6-succinyllysine; alternate modification is found at lysine 71. Lysine 195 is modified (N6-succinyllysine). An FAD-binding site is contributed by 214–223 (FCLTEPSSGS). Cysteine 237 bears the S-nitrosocysteine mark. At lysine 239 the chain carries N6-acetyllysine; alternate. An N6-succinyllysine; alternate modification is found at lysine 239. 249–251 (WIS) serves as a coordination point for FAD. N6-acetyllysine; alternate occurs at positions 276 and 278. N6-succinyllysine; alternate occurs at positions 276 and 278. Lysine 298 is modified (N6-acetyllysine). Residue lysine 331 is modified to N6-acetyllysine; alternate. Lysine 331 is subject to N6-succinyllysine; alternate. The residue at position 372 (lysine 372) is an N6-succinyllysine. 461–463 (FEG) contacts substrate. Catalysis depends on glutamate 462, which acts as the Proton acceptor. 464 to 466 (TND) provides a ligand contact to FAD. Lysine 482 bears the N6-acetyllysine; alternate mark. Lysine 482 bears the N6-succinyllysine; alternate mark. A membrane-anchoring region spans residues 483 to 516 (ELSGLGNALKNPFGNAGLLLGEAGKQLRRRAGLG). Phosphoserine occurs at positions 517 and 522. Lysine 550 bears the N6-acetyllysine mark. An N6-acetyllysine; alternate modification is found at lysine 556. Lysine 556 carries the post-translational modification N6-succinyllysine; alternate. Residue glutamine 562 coordinates FAD. Lysine 639 carries the post-translational modification N6-succinyllysine.

It belongs to the acyl-CoA dehydrogenase family. As to quaternary structure, homodimer. Homodimerizes after import into the mitochondrion. The cofactor is FAD. S-nitrosylation at Cys-237 in liver improves catalytic efficiency.

It localises to the mitochondrion inner membrane. It catalyses the reaction a very-long-chain 2,3-saturated fatty acyl-CoA + oxidized [electron-transfer flavoprotein] + H(+) = a very-long-chain (2E)-enoyl-CoA + reduced [electron-transfer flavoprotein]. The enzyme catalyses dodecanoyl-CoA + oxidized [electron-transfer flavoprotein] + H(+) = (2E)-dodecenoyl-CoA + reduced [electron-transfer flavoprotein]. It carries out the reaction tetradecanoyl-CoA + oxidized [electron-transfer flavoprotein] + H(+) = (2E)-tetradecenoyl-CoA + reduced [electron-transfer flavoprotein]. The catalysed reaction is oxidized [electron-transfer flavoprotein] + hexadecanoyl-CoA + H(+) = (2E)-hexadecenoyl-CoA + reduced [electron-transfer flavoprotein]. It catalyses the reaction octadecanoyl-CoA + oxidized [electron-transfer flavoprotein] + H(+) = (2E)-octadecenoyl-CoA + reduced [electron-transfer flavoprotein]. The enzyme catalyses eicosanoyl-CoA + oxidized [electron-transfer flavoprotein] + H(+) = (2E)-eicosenoyl-CoA + reduced [electron-transfer flavoprotein]. It carries out the reaction docosanoyl-CoA + oxidized [electron-transfer flavoprotein] + H(+) = (2E)-docosenoyl-CoA + reduced [electron-transfer flavoprotein]. The catalysed reaction is tetracosanoyl-CoA + oxidized [electron-transfer flavoprotein] + H(+) = (2E)-tetracosenoyl-CoA + reduced [electron-transfer flavoprotein]. It functions in the pathway lipid metabolism; mitochondrial fatty acid beta-oxidation. Very long-chain specific acyl-CoA dehydrogenase is one of the acyl-CoA dehydrogenases that catalyze the first step of mitochondrial fatty acid beta-oxidation, an aerobic process breaking down fatty acids into acetyl-CoA and allowing the production of energy from fats. The first step of fatty acid beta-oxidation consists in the removal of one hydrogen from C-2 and C-3 of the straight-chain fatty acyl-CoA thioester, resulting in the formation of trans-2-enoyl-CoA. Among the different mitochondrial acyl-CoA dehydrogenases, very long-chain specific acyl-CoA dehydrogenase acts specifically on acyl-CoAs with saturated 12 to 24 carbons long primary chains. The sequence is that of Very long-chain specific acyl-CoA dehydrogenase, mitochondrial from Bos taurus (Bovine).